We begin with the raw amino-acid sequence, 152 residues long: Protein-export protein SecB (152 aa).

Belongs to the SecB family. In terms of assembly, homotetramer, a dimer of dimers. One homotetramer interacts with 1 SecA dimer.

The protein resides in the cytoplasm. Functionally, one of the proteins required for the normal export of preproteins out of the cell cytoplasm. It is a molecular chaperone that binds to a subset of precursor proteins, maintaining them in a translocation-competent state. It also specifically binds to its receptor SecA. This is Protein-export protein SecB from Rickettsia massiliae (strain Mtu5).